A 210-amino-acid chain; its full sequence is ATP-dependent Clp protease proteolytic subunit (210 aa).

Serine 106 serves as the catalytic Nucleophile. The active site involves histidine 131.

This sequence belongs to the peptidase S14 family. In terms of assembly, fourteen ClpP subunits assemble into 2 heptameric rings which stack back to back to give a disk-like structure with a central cavity, resembling the structure of eukaryotic proteasomes.

The protein resides in the cytoplasm. The enzyme catalyses Hydrolysis of proteins to small peptides in the presence of ATP and magnesium. alpha-casein is the usual test substrate. In the absence of ATP, only oligopeptides shorter than five residues are hydrolyzed (such as succinyl-Leu-Tyr-|-NHMec, and Leu-Tyr-Leu-|-Tyr-Trp, in which cleavage of the -Tyr-|-Leu- and -Tyr-|-Trp bonds also occurs).. Functionally, cleaves peptides in various proteins in a process that requires ATP hydrolysis. Has a chymotrypsin-like activity. Plays a major role in the degradation of misfolded proteins. The protein is ATP-dependent Clp protease proteolytic subunit of Bartonella henselae (strain ATCC 49882 / DSM 28221 / CCUG 30454 / Houston 1) (Rochalimaea henselae).